The following is a 140-amino-acid chain: MNPVTVFFVVVVTVAACMILFQVYSIYLNYDNIKEFNAMHSPLEYSKMVNVTAIDRRIQDANDDIYDAKQKWRCVKLDDSYVSLSMFGYKSDGIGIRRFRTLNSCIDYTFSTSTHSSILNPCISPNDPKSRECTFLKSVL.

Residues 1 to 21 (MNPVTVFFVVVVTVAACMILF) traverse the membrane as a helical; Signal-anchor for type II membrane protein segment. The Virion surface segment spans residues 22–140 (QVYSIYLNYD…RECTFLKSVL (119 aa)).

Belongs to the poxviridae A28 protein family. Contains two intramolecular disulfide bonds. They are created by the viral disulfide bond formation pathway, a poxvirus-specific pathway that operates on the cytoplasmic side of the MV membranes.

The protein resides in the virion membrane. Functionally, envelope protein required for virus entry into host cell and for cell-cell fusion (syncytium formation). In Oryctolagus cuniculus (Rabbit), this protein is Envelope protein A28 homolog.